We begin with the raw amino-acid sequence, 327 residues long: GMP reductase (327 aa).

The active-site Thioimidate intermediate is C176. NADP(+) is bound at residue 205–228 (IIADGGIRTHGDIAKSIRFGASMV).

Belongs to the IMPDH/GMPR family. GuaC type 2 subfamily.

The enzyme catalyses IMP + NH4(+) + NADP(+) = GMP + NADPH + 2 H(+). Its function is as follows. Catalyzes the irreversible NADPH-dependent deamination of GMP to IMP. It functions in the conversion of nucleobase, nucleoside and nucleotide derivatives of G to A nucleotides, and in maintaining the intracellular balance of A and G nucleotides. The sequence is that of GMP reductase from Streptococcus agalactiae serotype Ia (strain ATCC 27591 / A909 / CDC SS700).